The primary structure comprises 218 residues: Thiamine-phosphate synthase (218 aa).

4-amino-2-methyl-5-(diphosphooxymethyl)pyrimidine-binding positions include 46-50 (QFRDK) and aspartate 83. Positions 84 and 103 each coordinate Mg(2+). Serine 122 provides a ligand contact to 4-amino-2-methyl-5-(diphosphooxymethyl)pyrimidine. 2-[(2R,5Z)-2-carboxy-4-methylthiazol-5(2H)-ylidene]ethyl phosphate is bound at residue 149–151 (TNS). Lysine 152 is a binding site for 4-amino-2-methyl-5-(diphosphooxymethyl)pyrimidine. Residues glycine 181 and 201 to 202 (IT) contribute to the 2-[(2R,5Z)-2-carboxy-4-methylthiazol-5(2H)-ylidene]ethyl phosphate site.

It belongs to the thiamine-phosphate synthase family. It depends on Mg(2+) as a cofactor.

It catalyses the reaction 2-[(2R,5Z)-2-carboxy-4-methylthiazol-5(2H)-ylidene]ethyl phosphate + 4-amino-2-methyl-5-(diphosphooxymethyl)pyrimidine + 2 H(+) = thiamine phosphate + CO2 + diphosphate. It carries out the reaction 2-(2-carboxy-4-methylthiazol-5-yl)ethyl phosphate + 4-amino-2-methyl-5-(diphosphooxymethyl)pyrimidine + 2 H(+) = thiamine phosphate + CO2 + diphosphate. The enzyme catalyses 4-methyl-5-(2-phosphooxyethyl)-thiazole + 4-amino-2-methyl-5-(diphosphooxymethyl)pyrimidine + H(+) = thiamine phosphate + diphosphate. Its pathway is cofactor biosynthesis; thiamine diphosphate biosynthesis; thiamine phosphate from 4-amino-2-methyl-5-diphosphomethylpyrimidine and 4-methyl-5-(2-phosphoethyl)-thiazole: step 1/1. Its function is as follows. Condenses 4-methyl-5-(beta-hydroxyethyl)thiazole monophosphate (THZ-P) and 2-methyl-4-amino-5-hydroxymethyl pyrimidine pyrophosphate (HMP-PP) to form thiamine monophosphate (TMP). In Actinobacillus pleuropneumoniae serotype 7 (strain AP76), this protein is Thiamine-phosphate synthase.